We begin with the raw amino-acid sequence, 270 residues long: MSREEEKSPFTEHLGELRDRLVRSFIAVGVGFVIAYCFKERLFDILTAPLIAAMGEGQKMIFTGLPEAFFTYLKVSLLTGVILATPVLFYEFWMFVSPGLYRKEKRFVLPVVILSIFFFCVGSSFGYFIVFPYGFQFFLGFSSDTIQAMPSMKEYLGFASKMLLAFGFVFELPLVLTFMARMGLVSVEFLKKNRKYAILIFFTGAALITPPDVVTQIMMAIPLMILYEISIIGARVFGKKKDSDEEEAAENSDVQTDKSTDDTTPGEDQN.

Helical transmembrane passes span 25–45 (FIAV…LFDI), 75–95 (VSLL…FWMF), 111–131 (VVIL…FIVF), 156–176 (LGFA…PLVL), 195–211 (KYAI…ITPP), and 213–233 (VVTQ…SIIG). The tract at residues 243 to 270 (SDEEEAAENSDVQTDKSTDDTTPGEDQN) is disordered.

It belongs to the TatC family. In terms of assembly, the Tat system comprises two distinct complexes: a TatABC complex, containing multiple copies of TatA, TatB and TatC subunits, and a separate TatA complex, containing only TatA subunits. Substrates initially bind to the TatABC complex, which probably triggers association of the separate TatA complex to form the active translocon.

It localises to the cell inner membrane. Part of the twin-arginine translocation (Tat) system that transports large folded proteins containing a characteristic twin-arginine motif in their signal peptide across membranes. Together with TatB, TatC is part of a receptor directly interacting with Tat signal peptides. The polypeptide is Sec-independent protein translocase protein TatC (Desulforapulum autotrophicum (strain ATCC 43914 / DSM 3382 / VKM B-1955 / HRM2) (Desulfobacterium autotrophicum)).